The primary structure comprises 690 residues: UvrABC system protein C (690 aa).

One can recognise a GIY-YIG domain in the interval 15–94; that stretch reads TDPGVYTFRD…IKRFNPRFNV (80 aa). The 36-residue stretch at 207–242 folds into the UVR domain; it reads EPVLRRVRKEMEQASENLDFERAASLRDQLQAMQKS.

The protein belongs to the UvrC family. In terms of assembly, interacts with UvrB in an incision complex.

The protein resides in the cytoplasm. Its function is as follows. The UvrABC repair system catalyzes the recognition and processing of DNA lesions. UvrC both incises the 5' and 3' sides of the lesion. The N-terminal half is responsible for the 3' incision and the C-terminal half is responsible for the 5' incision. The polypeptide is UvrABC system protein C (Corynebacterium jeikeium (strain K411)).